A 397-amino-acid polypeptide reads, in one-letter code: Elongation factor Tu (397 aa).

The tr-type G domain maps to 10 to 206 (KPHVNIGTIG…AVDSYIPTPE (197 aa)). A G1 region spans residues 19–26 (GHVDHGKT). 19 to 26 (GHVDHGKT) lines the GTP pocket. T26 provides a ligand contact to Mg(2+). Positions 60–64 (GITIN) are G2. Residues 81–84 (DCPG) form a G3 region. Residues 81–85 (DCPGH) and 136–139 (NKAD) contribute to the GTP site. The tract at residues 136-139 (NKAD) is G4. Positions 174–176 (SAL) are G5.

It belongs to the TRAFAC class translation factor GTPase superfamily. Classic translation factor GTPase family. EF-Tu/EF-1A subfamily. As to quaternary structure, monomer.

The protein resides in the cytoplasm. It carries out the reaction GTP + H2O = GDP + phosphate + H(+). GTP hydrolase that promotes the GTP-dependent binding of aminoacyl-tRNA to the A-site of ribosomes during protein biosynthesis. This chain is Elongation factor Tu, found in Clostridium beijerinckii (strain ATCC 51743 / NCIMB 8052) (Clostridium acetobutylicum).